The sequence spans 183 residues: Capsid protein (183 aa).

Positions 136 to 183 are disordered; that stretch reads NAPILSTLPETTVVRRRGRSPRRRTPSPRRRRSESPRRRRSQSRESQC. Basic residues predominate over residues 149-176; it reads VRRRGRSPRRRTPSPRRRRSESPRRRRS. A phosphoserine; by host mark is found at S155, S162, and S170. One copy of the 1; half-length repeat lies at 155-160; sequence SPRRRT. The 3 X 7 AA repeats of S-P-R-R-R-[PR]-S stretch occupies residues 155 to 176; the sequence is SPRRRTPSPRRRRSESPRRRRS. The short motif at 158 to 175 is the Bipartite nuclear localization signal element; sequence RRTPSPRRRRSESPRRRR. Tandem repeats lie at residues 162-168 and 170-176. Residues 177–183 form an RNA binding region; the sequence is QSRESQC.

Belongs to the orthohepadnavirus core antigen family. In terms of assembly, homodimerizes, then multimerizes. Interacts with cytosol exposed regions of viral L glycoprotein present in the reticulum-to-Golgi compartment. Interacts with human FLNB. Phosphorylated form interacts with host importin alpha; this interaction depends on the exposure of the NLS, which itself depends upon genome maturation and/or phosphorylation of the capsid protein. Interacts with host NUP153. In terms of processing, phosphorylated by host SRPK1, SRPK2, and maybe protein kinase C or GAPDH. Phosphorylation is critical for pregenomic RNA packaging. Protein kinase C phosphorylation is stimulated by HBx protein and may play a role in transport of the viral genome to the nucleus at the late step during the viral replication cycle.

It localises to the virion. It is found in the host cytoplasm. Self assembles to form an icosahedral capsid. Most capsids appear to be large particles with an icosahedral symmetry of T=4 and consist of 240 copies of capsid protein, though a fraction forms smaller T=3 particles consisting of 180 capsid proteins. Entering capsids are transported along microtubules to the nucleus. Phosphorylation of the capsid is thought to induce exposure of nuclear localization signal in the C-terminal portion of the capsid protein that allows binding to the nuclear pore complex via the importin (karyopherin-) alpha and beta. Capsids are imported in intact form through the nuclear pore into the nuclear basket, where it probably binds NUP153. Only capsids that contain the mature viral genome can release the viral DNA and capsid protein into the nucleoplasm. Immature capsids get stuck in the basket. Capsids encapsulate the pre-genomic RNA and the P protein. Pre-genomic RNA is reverse-transcribed into DNA while the capsid is still in the cytoplasm. The capsid can then either be directed to the nucleus, providing more genomes for transcription, or bud through the endoplasmic reticulum to provide new virions. This is Capsid protein from Homo sapiens (Human).